A 299-amino-acid polypeptide reads, in one-letter code: N-acetylmuramic acid 6-phosphate etherase (299 aa).

Positions 55-218 (CINCLEKNGR…STTVMVKMGK (164 aa)) constitute an SIS domain. The Proton donor role is filled by Glu83. Residue Glu114 is part of the active site.

This sequence belongs to the GCKR-like family. MurNAc-6-P etherase subfamily. Homodimer.

It catalyses the reaction N-acetyl-D-muramate 6-phosphate + H2O = N-acetyl-D-glucosamine 6-phosphate + (R)-lactate. It functions in the pathway amino-sugar metabolism; N-acetylmuramate degradation. Functionally, specifically catalyzes the cleavage of the D-lactyl ether substituent of MurNAc 6-phosphate, producing GlcNAc 6-phosphate and D-lactate. The sequence is that of N-acetylmuramic acid 6-phosphate etherase from Pseudothermotoga lettingae (strain ATCC BAA-301 / DSM 14385 / NBRC 107922 / TMO) (Thermotoga lettingae).